The primary structure comprises 337 residues: D-alanine--D-alanine ligase (337 aa).

One can recognise an ATP-grasp domain in the interval 124–330 (KMWFSALGIP…FTEYLSLVIN (207 aa)). 154 to 209 (ALANWGSIFIKAASQGSSVGCYKVDDSSKVAQVLKDAFGYAPYVVVEKTIKARELE) is an ATP binding site. 3 residues coordinate Mg(2+): D284, E297, and N299.

Belongs to the D-alanine--D-alanine ligase family. The cofactor is Mg(2+). Requires Mn(2+) as cofactor.

It is found in the cytoplasm. The enzyme catalyses 2 D-alanine + ATP = D-alanyl-D-alanine + ADP + phosphate + H(+). It participates in cell wall biogenesis; peptidoglycan biosynthesis. Its function is as follows. Cell wall formation. This Shewanella putrefaciens (strain CN-32 / ATCC BAA-453) protein is D-alanine--D-alanine ligase.